The chain runs to 309 residues: Ribosomal RNA small subunit methyltransferase H (309 aa).

Residues 36–38 (GGH), Asp56, Phe82, Asp103, and Gln110 each bind S-adenosyl-L-methionine.

The protein belongs to the methyltransferase superfamily. RsmH family.

It localises to the cytoplasm. It catalyses the reaction cytidine(1402) in 16S rRNA + S-adenosyl-L-methionine = N(4)-methylcytidine(1402) in 16S rRNA + S-adenosyl-L-homocysteine + H(+). In terms of biological role, specifically methylates the N4 position of cytidine in position 1402 (C1402) of 16S rRNA. The polypeptide is Ribosomal RNA small subunit methyltransferase H (Hahella chejuensis (strain KCTC 2396)).